Here is a 291-residue protein sequence, read N- to C-terminus: S-methyl-5'-thioadenosine phosphorylase (291 aa).

Phosphate contacts are provided by residues S12, 54-55 (RH), and 87-88 (SA). M185 serves as a coordination point for substrate. T186 contributes to the phosphate binding site. Residue 209–211 (DFD) coordinates substrate.

It belongs to the PNP/MTAP phosphorylase family. MTAP subfamily. As to quaternary structure, homohexamer. Dimer of a homotrimer.

The enzyme catalyses S-methyl-5'-thioadenosine + phosphate = 5-(methylsulfanyl)-alpha-D-ribose 1-phosphate + adenine. The protein operates within amino-acid biosynthesis; L-methionine biosynthesis via salvage pathway; S-methyl-5-thio-alpha-D-ribose 1-phosphate from S-methyl-5'-thioadenosine (phosphorylase route): step 1/1. Functionally, catalyzes the reversible phosphorylation of S-methyl-5'-thioadenosine (MTA) to adenine and 5-methylthioribose-1-phosphate. Involved in the breakdown of MTA, a major by-product of polyamine biosynthesis. Responsible for the first step in the methionine salvage pathway after MTA has been generated from S-adenosylmethionine. Has broad substrate specificity with 6-aminopurine nucleosides as preferred substrates. In Bradyrhizobium diazoefficiens (strain JCM 10833 / BCRC 13528 / IAM 13628 / NBRC 14792 / USDA 110), this protein is S-methyl-5'-thioadenosine phosphorylase.